A 122-amino-acid polypeptide reads, in one-letter code: Large ribosomal subunit protein uL14 (122 aa).

This sequence belongs to the universal ribosomal protein uL14 family. In terms of assembly, part of the 50S ribosomal subunit. Forms a cluster with proteins L3 and L19. In the 70S ribosome, L14 and L19 interact and together make contacts with the 16S rRNA in bridges B5 and B8.

Functionally, binds to 23S rRNA. Forms part of two intersubunit bridges in the 70S ribosome. The sequence is that of Large ribosomal subunit protein uL14 from Synechococcus sp. (strain JA-3-3Ab) (Cyanobacteria bacterium Yellowstone A-Prime).